The following is a 198-amino-acid chain: Carnitine operon protein CaiE (198 aa).

The segment at 179-198 (VEENRPRLKGTTDVKPKSAQ) is disordered. Residues 180-198 (EENRPRLKGTTDVKPKSAQ) show a composition bias toward basic and acidic residues.

The protein belongs to the transferase hexapeptide repeat family.

Its pathway is amine and polyamine metabolism; carnitine metabolism. In terms of biological role, overproduction of CaiE stimulates the activity of CaiB and CaiD. This chain is Carnitine operon protein CaiE, found in Salmonella agona (strain SL483).